A 360-amino-acid chain; its full sequence is Photosystem II protein D1 3 (360 aa).

A run of 3 helical transmembrane segments spans residues 29–46 (YVGWFGVLMIPTLLTATI), 118–133 (HFLLGIFSYMGREWEL), and 142–156 (WIAVAYSAPVAAATA). His-118 provides a ligand contact to chlorophyll a. A pheophytin a-binding site is contributed by Tyr-126. Residues Asp-170 and Glu-189 each coordinate [CaMn4O5] cluster. Residues 197-218 (FHMLGVAGVFGGALFSAMHGSL) traverse the membrane as a helical segment. Position 198 (His-198) interacts with chlorophyll a. Residues His-215 and 264–265 (SF) contribute to the a quinone site. His-215 serves as a coordination point for Fe cation. His-272 is a Fe cation binding site. A helical transmembrane segment spans residues 274–288 (FLAAWPVIGIWFASL). 4 residues coordinate [CaMn4O5] cluster: His-332, Glu-333, Asp-342, and Ala-344. The propeptide occupies 345–360 (AGDQAPVALQAPAING).

Belongs to the reaction center PufL/M/PsbA/D family. PSII is composed of 1 copy each of membrane proteins PsbA, PsbB, PsbC, PsbD, PsbE, PsbF, PsbH, PsbI, PsbJ, PsbK, PsbL, PsbM, PsbT, PsbX, PsbY, PsbZ, Psb30/Ycf12, peripheral proteins PsbO, CyanoQ (PsbQ), PsbU, PsbV and a large number of cofactors. It forms dimeric complexes. It depends on The D1/D2 heterodimer binds P680, chlorophylls that are the primary electron donor of PSII, and subsequent electron acceptors. It shares a non-heme iron and each subunit binds pheophytin, quinone, additional chlorophylls, carotenoids and lipids. D1 provides most of the ligands for the Mn4-Ca-O5 cluster of the oxygen-evolving complex (OEC). There is also a Cl(-1) ion associated with D1 and D2, which is required for oxygen evolution. The PSII complex binds additional chlorophylls, carotenoids and specific lipids. as a cofactor. Tyr-161 forms a radical intermediate that is referred to as redox-active TyrZ, YZ or Y-Z. In terms of processing, C-terminally processed by CtpA; processing is essential to allow assembly of the oxygen-evolving complex and thus photosynthetic growth.

It is found in the cellular thylakoid membrane. The catalysed reaction is 2 a plastoquinone + 4 hnu + 2 H2O = 2 a plastoquinol + O2. Functionally, photosystem II (PSII) is a light-driven water:plastoquinone oxidoreductase that uses light energy to abstract electrons from H(2)O, generating O(2) and a proton gradient subsequently used for ATP formation. It consists of a core antenna complex that captures photons, and an electron transfer chain that converts photonic excitation into a charge separation. The D1/D2 (PsbA/PsbD) reaction center heterodimer binds P680, the primary electron donor of PSII as well as several subsequent electron acceptors. In Picosynechococcus sp. (strain ATCC 27264 / PCC 7002 / PR-6) (Agmenellum quadruplicatum), this protein is Photosystem II protein D1 3.